A 49-amino-acid polypeptide reads, in one-letter code: Large ribosomal subunit protein bL33 (49 aa).

It belongs to the bacterial ribosomal protein bL33 family.

This chain is Large ribosomal subunit protein bL33, found in Syntrophus aciditrophicus (strain SB).